Reading from the N-terminus, the 142-residue chain is Hemoglobin subunit alpha (142 aa).

Positions Lys-2–Arg-142 constitute a Globin domain. His-59 provides a ligand contact to O2. His-88 lines the heme b pocket.

Belongs to the globin family. Heterotetramer of two alpha chains and two beta chains. In terms of tissue distribution, red blood cells.

In terms of biological role, involved in oxygen transport from the lung to the various peripheral tissues. The protein is Hemoglobin subunit alpha (HBA) of Taricha granulosa (Roughskin newt).